A 179-amino-acid polypeptide reads, in one-letter code: Translation initiation factor IF-3 (179 aa).

It belongs to the IF-3 family. In terms of assembly, monomer.

The protein localises to the cytoplasm. Functionally, IF-3 binds to the 30S ribosomal subunit and shifts the equilibrium between 70S ribosomes and their 50S and 30S subunits in favor of the free subunits, thus enhancing the availability of 30S subunits on which protein synthesis initiation begins. This chain is Translation initiation factor IF-3, found in Proteus hauseri.